A 94-amino-acid chain; its full sequence is Ribonuclease P protein component 1 (94 aa).

Belongs to the eukaryotic/archaeal RNase P protein component 1 family. Consists of a catalytic RNA component and at least 4-5 protein subunits.

It is found in the cytoplasm. It catalyses the reaction Endonucleolytic cleavage of RNA, removing 5'-extranucleotides from tRNA precursor.. Functionally, part of ribonuclease P, a protein complex that generates mature tRNA molecules by cleaving their 5'-ends. This chain is Ribonuclease P protein component 1, found in Thermofilum pendens (strain DSM 2475 / Hrk 5).